Reading from the N-terminus, the 319-residue chain is MEVERLDYTDFLNEAPGRQEAFVQHLYAALSRVGFAKITNHPIPESVILQLFAWTKGFFTLPLEHKRKAAHPPQPNPHRGWSCIGQEKLSVIAQGKAVLDLKESFDMGPGDDELYPNIWTDEGDLPGFRAFMEDFYGRCQSLHLQLLSAIARSMQLPDSYFAPLCSQNSSELRLNHYPAVSRHDLTTGTMRISSHTDFGTITLLFQDSVGGLEVEDQTRPGHYMPVAADDCTDIIVNVGDCLQRWTNDRLRSANHRVTLPRGLTHGMVDDRYSIAYFGKPSRDVSVRTLSALLRANEEAKYREEMTAWQYNQSRLLQTY.

The Fe2OG dioxygenase domain occupies 168-280; the sequence is NSSELRLNHY…RYSIAYFGKP (113 aa). Positions 195, 197, and 255 each coordinate Fe cation. Residue arginine 271 coordinates 2-oxoglutarate.

Belongs to the iron/ascorbate-dependent oxidoreductase family. It depends on Fe(2+) as a cofactor.

It functions in the pathway mycotoxin biosynthesis. Proline hydroxylase; part of the gene cluster that mediates the biosynthesis of burnettramic acids, an unusual class of bolaamphiphilic pyrrolizidinediones that display potent antibacterial, antifungal, and cytotoxic activities. The first step of the biosynthesis of burnettramic acids is the hydroxylation of proline by the proline hydroxylase buaE to generate 4-hydroxyproline. The PKS-NRPS buaA and trans-enoyl reductase buaC construct the highly reduced polyketide chain, and the condensation (C) domain of buaA then catalyzes the amide bond formation with the activated 4-hydroxyproline. This is followed by the R domain releasing the nascent polyketide-peptide directly via a Dieckmann condensation to afford a tetramic acid fused to the hydroxyproline, generating the bicyclic pyrrolidinedione moiety. The cytochrome P450 monooxygenases buaD and buaG are likely responsible for the multiple hydroxylations on the polyketide chain and its terminus, although in the heterologous context, buaD does not appear to be required. Therefore, while buaG may be a multifunctional cytochrome P450 monooxygenase, it cannot be ruled out that the two secondary alcohols on the polyketide chain could have an acetate origin. Finally, the glycosyltransferase buaB transfers beta-D-mannose to the aglycone burnettramic acid A to form burnettramic acid A. Burnettramic acid B is a minor cis-pyrrolizidine epimer of burnettramic acid A and it is likely that small amounts of it form naturally in acidic environments. The chain is Proline hydroxylase buaE from Petromyces alliaceus (Aspergillus alliaceus).